A 128-amino-acid chain; its full sequence is Putative transmembrane protein 244 (128 aa).

The next 3 helical transmembrane spans lie at 17 to 37, 65 to 85, and 93 to 113; these read FLLC…MGCV, VLLV…VPVV, and AISV…EFPL.

Its subcellular location is the membrane. In Homo sapiens (Human), this protein is Putative transmembrane protein 244 (TMEM244).